A 957-amino-acid polypeptide reads, in one-letter code: Dystrophin-related protein 2 (957 aa).

Spectrin repeat units lie at residues 102–179 (DLSG…EELE) and 231–337 (EHLL…QLQD). The region spanning 358 to 383 (WERAISPNKVPYYINHQAQTTCWDHP) is the WW domain. Residues 605–661 (KHQTKCSICRQCPIKGFRYRSLKQFNVDICQTCFLTGRASKGNKLHYPIMEYYTPTT) form a ZZ-type; degenerate zinc finger. C610, C613, C634, and C637 together coordinate Zn(2+). Phosphoserine is present on S748. Low complexity predominate over residues 876–894 (QPPSESDGNGSAGSSLASS). Positions 876–923 (QPPSESDGNGSAGSSLASSPRQSEGSHPREKGQTTPDTEVADDVGSKS) are disordered. Position 910 is a phosphothreonine (T910).

As to quaternary structure, interacts with PRX; this enhances phosphorylation. Identified in a dystroglycan complex that contains at least PRX, DRP2, UTRN, DMD and DAG1. In terms of tissue distribution, detected in quadriceps nerve Schwann cells. Detected in sciatic nerve. Detected in trigeminal nerve Schwann cells (at protein level). Detected in brain and spinal cord.

The protein localises to the postsynaptic density. Its subcellular location is the cell projection. The protein resides in the dendrite. It is found in the perikaryon. It localises to the cell membrane. Its function is as follows. Required for normal myelination and for normal organization of the cytoplasm and the formation of Cajal bands in myelinating Schwann cells. Required for normal PRX location at appositions between the abaxonal surface of the myelin sheath and the Schwann cell plasma membrane. Possibly involved in membrane-cytoskeleton interactions of the central nervous system. The protein is Dystrophin-related protein 2 (Drp2) of Mus musculus (Mouse).